We begin with the raw amino-acid sequence, 105 residues long: Large ribosomal subunit protein uL24 (105 aa).

Belongs to the universal ribosomal protein uL24 family. In terms of assembly, part of the 50S ribosomal subunit.

One of two assembly initiator proteins, it binds directly to the 5'-end of the 23S rRNA, where it nucleates assembly of the 50S subunit. Its function is as follows. One of the proteins that surrounds the polypeptide exit tunnel on the outside of the subunit. This chain is Large ribosomal subunit protein uL24, found in Francisella tularensis subsp. tularensis (strain FSC 198).